The following is a 1059-amino-acid chain: Protein OPAQUE10 (1059 aa).

Repeat copies occupy residues 269 to 342 (SLLE…KESC), 343 to 416 (SLLE…KESC), 417 to 490 (SPLE…KESC), 491 to 564 (SPLE…KESC), 565 to 638 (FPLE…KESC), 639 to 712 (SPLE…KESC), and 713 to 786 (SPLE…KESC). The interval 269-786 (SLLEPEDSVN…SRPIHDKESC (518 aa)) is 7 X approximate repeats. The tract at residues 511 to 534 (FNDAPNKESEGYGESGRGKHGEKS) is disordered. Basic and acidic residues predominate over residues 515–534 (PNKESEGYGESGRGKHGEKS). Disordered stretches follow at residues 732 to 756 (QYSD…EEKS), 856 to 875 (ETLA…DTGT), and 889 to 998 (SVCS…SGKG). The span at 858–869 (LADHPKKEEAGL) shows a compositional bias: basic and acidic residues. Composition is skewed to polar residues over residues 907-924 (DFSS…NTGG) and 945-958 (ASDS…PEAS). Residues 984–994 (TRGRPEGDAPR) are compositionally biased toward basic and acidic residues. Residues 1003–1023 (VAGGITLVGAVFFMFHLSAAL) traverse the membrane as a helical segment.

In terms of assembly, homodimer. Interacts (via N-terminus) with FL1 (via C-terminus), HIP, 19 kDa alpha-zein (AC P06677), 22 kDa alpha-zein (AC O48966), 16 kDa gamma-zein (AC P08031) and 50 kDa gamma-zein (AC C0P381). As to expression, expressed in kernels.

The protein localises to the endoplasmic reticulum membrane. Cereal endosperm protein required for the ring-shaped distribution of 22 kDa alpha- and 16 kDa gamma-zeins in protein bodies. The polypeptide is Protein OPAQUE10 (Zea mays (Maize)).